The following is a 282-amino-acid chain: Large ribosomal subunit protein uL2 (282 aa).

The segment at 215-282 (RHKGIRPTVR…IIRSRKETKK (68 aa)) is disordered. A compositionally biased stretch (basic residues) spans 263-282 (RNPKKPSTKLIIRSRKETKK).

The protein belongs to the universal ribosomal protein uL2 family. Part of the 50S ribosomal subunit. Forms a bridge to the 30S subunit in the 70S ribosome.

Functionally, one of the primary rRNA binding proteins. Required for association of the 30S and 50S subunits to form the 70S ribosome, for tRNA binding and peptide bond formation. It has been suggested to have peptidyltransferase activity; this is somewhat controversial. Makes several contacts with the 16S rRNA in the 70S ribosome. In Mesomycoplasma hyopneumoniae (strain J / ATCC 25934 / NCTC 10110) (Mycoplasma hyopneumoniae), this protein is Large ribosomal subunit protein uL2.